A 340-amino-acid polypeptide reads, in one-letter code: tRNA N6-adenosine threonylcarbamoyltransferase (340 aa).

Positions 113 and 117 each coordinate Fe cation. Substrate contacts are provided by residues 135–139, Asp-169, Gly-182, Asp-186, and Asn-274; that span reads LVSGG. Residue Asp-302 participates in Fe cation binding.

The protein belongs to the KAE1 / TsaD family. It depends on Fe(2+) as a cofactor.

The protein resides in the cytoplasm. The enzyme catalyses L-threonylcarbamoyladenylate + adenosine(37) in tRNA = N(6)-L-threonylcarbamoyladenosine(37) in tRNA + AMP + H(+). Required for the formation of a threonylcarbamoyl group on adenosine at position 37 (t(6)A37) in tRNAs that read codons beginning with adenine. Is involved in the transfer of the threonylcarbamoyl moiety of threonylcarbamoyl-AMP (TC-AMP) to the N6 group of A37, together with TsaE and TsaB. TsaD likely plays a direct catalytic role in this reaction. The chain is tRNA N6-adenosine threonylcarbamoyltransferase from Mycolicibacterium smegmatis (strain ATCC 700084 / mc(2)155) (Mycobacterium smegmatis).